Consider the following 51-residue polypeptide: Large ribosomal subunit protein bL33 (51 aa).

The protein belongs to the bacterial ribosomal protein bL33 family.

This chain is Large ribosomal subunit protein bL33, found in Pseudomonas putida (strain ATCC 47054 / DSM 6125 / CFBP 8728 / NCIMB 11950 / KT2440).